The following is a 101-amino-acid chain: Small ribosomal subunit protein uS14A (101 aa).

The tract at residues 29-73 (AIISSPSTPADARAAAQSELNRQPRDASPVRVRNRDAVDGRPRGH) is disordered. Residues 61–70 (RNRDAVDGRP) are compositionally biased toward basic and acidic residues.

Belongs to the universal ribosomal protein uS14 family. In terms of assembly, part of the 30S ribosomal subunit. Contacts proteins S3 and S10.

Binds 16S rRNA, required for the assembly of 30S particles and may also be responsible for determining the conformation of the 16S rRNA at the A site. In Mycolicibacterium gilvum (strain PYR-GCK) (Mycobacterium gilvum (strain PYR-GCK)), this protein is Small ribosomal subunit protein uS14A.